Consider the following 279-residue polypeptide: NAD kinase (279 aa).

Residue aspartate 61 is the Proton acceptor of the active site. Residues aspartate 61–glycine 62, asparagine 138–aspartate 139, lysine 149, lysine 166, aspartate 168, and threonine 179–serine 184 each bind NAD(+).

Belongs to the NAD kinase family. A divalent metal cation is required as a cofactor.

The protein localises to the cytoplasm. The catalysed reaction is NAD(+) + ATP = ADP + NADP(+) + H(+). Functionally, involved in the regulation of the intracellular balance of NAD and NADP, and is a key enzyme in the biosynthesis of NADP. Catalyzes specifically the phosphorylation on 2'-hydroxyl of the adenosine moiety of NAD to yield NADP. The chain is NAD kinase from Borreliella burgdorferi (strain ATCC 35210 / DSM 4680 / CIP 102532 / B31) (Borrelia burgdorferi).